Reading from the N-terminus, the 279-residue chain is Thymidylate synthase (279 aa).

A dUMP-binding site is contributed by 133–134 (RR). Residue Cys154 is the Nucleophile of the active site. DUMP-binding positions include 178 to 181 (RSND), Asn189, and 219 to 221 (HIY). Residue Asp181 participates in (6R)-5,10-methylene-5,6,7,8-tetrahydrofolate binding. Position 278 (Ala278) interacts with (6R)-5,10-methylene-5,6,7,8-tetrahydrofolate.

Belongs to the thymidylate synthase family. Bacterial-type ThyA subfamily. Homodimer.

Its subcellular location is the cytoplasm. The enzyme catalyses dUMP + (6R)-5,10-methylene-5,6,7,8-tetrahydrofolate = 7,8-dihydrofolate + dTMP. Its pathway is pyrimidine metabolism; dTTP biosynthesis. In terms of biological role, catalyzes the reductive methylation of 2'-deoxyuridine-5'-monophosphate (dUMP) to 2'-deoxythymidine-5'-monophosphate (dTMP) while utilizing 5,10-methylenetetrahydrofolate (mTHF) as the methyl donor and reductant in the reaction, yielding dihydrofolate (DHF) as a by-product. This enzymatic reaction provides an intracellular de novo source of dTMP, an essential precursor for DNA biosynthesis. The sequence is that of Thymidylate synthase from Streptococcus mutans serotype c (strain ATCC 700610 / UA159).